Consider the following 374-residue polypeptide: MGLPRGSFFWLLLLLTAACSGLLFALYFSAVQRYPGPAAGARDTTSFEAFFQSKASNSWTGKGQACRHLLHLAIQRHPHFRGLFNLSIPVLLWGDLFTPALWDRLSQHKAPYGWRGLSHQVIASTLSLLNGSESAKLFAPPRDTPPKCIRCAVVGNGGILNGSRQGPNIDAHDYVFRLNGAVIKGFERDVGTKTSFYGFTVNTMKNSLVSYWNLGFTSVPQGQDLQYIFIPSDIRDYVMLRSAILGVPVPEGLDKGDRPHAYFGPEASASKFKLLHPDFISYLTERFLKSKLINTHFGDLYMPSTGALMLLTALHTCDQVSAYGFITSNYWKFSDHYFERKMKPLIFYANHDLSLEAALWRDLHKAGILQLYQR.

The Cytoplasmic segment spans residues 1-7 (MGLPRGS). The helical; Signal-anchor for type II membrane protein transmembrane segment at 8–28 (FFWLLLLLTAACSGLLFALYF) threads the bilayer. Over 29 to 374 (SAVQRYPGPA…KAGILQLYQR (346 aa)) the chain is Lumenal. 2 disulfides stabilise this stretch: Cys-66–Cys-148 and Cys-151–Cys-317. Residues Asn-85 and Asn-130 are each glycosylated (N-linked (GlcNAc...) asparagine). Asn-156 provides a ligand contact to CMP-N-acetyl-beta-neuraminate. The N-linked (GlcNAc...) asparagine glycan is linked to Asn-161. The CMP-N-acetyl-beta-neuraminate site is built by Asn-179, Ser-304, and His-336.

This sequence belongs to the glycosyltransferase 29 family. As to expression, expressed in skeletal muscle, heart, kidney, placenta, lung and leukocytes.

It localises to the golgi apparatus membrane. The catalysed reaction is a beta-D-galactosyl-(1-&gt;3)-N-acetyl-alpha-D-galactosaminyl derivative + CMP-N-acetyl-beta-neuraminate = a beta-D-galactosyl-(1-&gt;3)-[N-acetyl-alpha-neuraminyl-(2-&gt;6)]-N-acetyl-alpha-D-galactosaminyl derivative + CMP + H(+). The enzyme catalyses a 3-O-[N-acetyl-alpha-D-galactosaminyl]-L-threonyl-[protein] + CMP-N-acetyl-beta-neuraminate = a 3-O-[N-acetyl-alpha-neuraminosyl-(2-&gt;6)-N-acetyl-alpha-D-galactosaminyl]-L-threonyl-[protein] + CMP + H(+). It carries out the reaction a 3-O-[N-acetyl-alpha-neuraminyl-(2-&gt;3)-beta-D-galactosyl-(1-&gt;3)-N-acetyl-alpha-D-galactosaminyl]-L-threonyl-[protein] + CMP-N-acetyl-beta-neuraminate = a 3-O-{alpha-Neu5Ac-(2-&gt;3)-beta-D-Gal-(1-&gt;3)-[alpha-Neu5Ac-(2-&gt;6)]-alpha-D-GalNAc}-L-threonyl-[protein] + CMP + H(+). The protein operates within protein modification; protein glycosylation. In terms of biological role, catalyzes the transfer of N-acetylneuraminyl groups onto glycan chains in glycoproteins. Conjugates sialic acid with an alpha-2-6 linkage to N-acetylgalactosamine (GalNAc) glycan chains linked to serine or threonine in glycoproteins. Sialylates alphaGalNAc- and Galbeta1-&gt;3GalNAc-O-Ser/Thr epitopes also known as Tn and T antigens. The polypeptide is Alpha-N-acetylgalactosaminide alpha-2,6-sialyltransferase 2 (ST6GALNAC2) (Homo sapiens (Human)).